The sequence spans 258 residues: Short-chain dehydrogenase/reductase olcF (258 aa).

NADP(+) contacts are provided by V12, D58, and R120. The active-site Proton donor is the S138. Residues Y152, K156, and V185 each contribute to the NADP(+) site. The active-site Proton acceptor is Y152. The active-site Lowers pKa of active site Tyr is the K156.

The protein belongs to the short-chain dehydrogenases/reductases (SDR) family.

It participates in secondary metabolite biosynthesis; terpenoid biosynthesis. In terms of biological role, short-chain dehydrogenase/reductase; part of the gene cluster that mediates the biosynthesis of 15-deoxyoxalicine B. The first step of the pathway is the synthesis of nicotinyl-CoA from nicotinic acid by the nicotinic acid-CoA ligase olcI. Nicotinyl-CoA is then a substrate of polyketide synthase olcA to produce 4-hydroxy-6-(3-pyridinyl)-2H-pyran-2-one (HPPO) which is further prenylated by the polyprenyl transferase olcH to yield geranylgeranyl-HPPO. Geranylgeranyl pyrophosphate is provided by the cluster-specific geranylgeranyl pyrophosphate synthase olcC. The FAD-dependent monooxygenase olcE catalyzes the epoxidation of geranylgeranyl-HPPO and the terpene cyclase olcD catalyzes the cyclization of the terpenoid component, resulting in the formation of the tricyclic terpene moiety seen in predecaturin E. The cytochrome P450 monooxygenase then catalyzes the allylic oxidation of predecaturin E, which is followed by spirocylization with concomitant loss of one molecule of water to form decaturin E. Decaturin E is the substrate of the cytochrome P450 monooxygenase olcJ which hydroxylates it at the C-29 position to form decaturin F. The short-chain dehydrogenase/reductase olcF may catalyze the oxidation of decaturin F to generate the 29-hydroxyl-27-one intermediate, and subsequent hemiacetal formation probably leads to the formation of decaturin C. The dioxygenase olcK may be a peroxisomal enzyme that catalyzes the hydroxylation of decaturin C into decaturin A once decaturin C is shuttled into the peroxisome by the MFS transporter olcL. Finally the cytochrome P450 monooxygenase olcB catalyzes the oxidative rearrangement to yield 15-deoxyoxalicine B. In the absence of olcJ, decaturin E may be shunted to a pathway in which it is oxidized to a ketone, possibly by olcF, to form decaturin D, which undergoes further allylic oxidation to yield decaturin G. Moreover, in the absence of oclK or oclL, oclB can convert decaturin C into 15-deoxyoxalicine A. This is Short-chain dehydrogenase/reductase olcF from Penicillium canescens.